A 746-amino-acid chain; its full sequence is Polyribonucleotide nucleotidyltransferase (746 aa).

Mg(2+) contacts are provided by D515 and D521. One can recognise a KH domain in the interval 581 to 640; that stretch reads PRVIAVKIPVDKIGEVIGPKGKMINQIQEDTGADISIEDDGTVYIGATNGPSADAARSAI. The 73-residue stretch at 652-724 folds into the S1 motif domain; it reads GERYLGTVVK…DRGKLSLSPV (73 aa).

The protein belongs to the polyribonucleotide nucleotidyltransferase family. Requires Mg(2+) as cofactor.

Its subcellular location is the cytoplasm. The catalysed reaction is RNA(n+1) + phosphate = RNA(n) + a ribonucleoside 5'-diphosphate. Involved in mRNA degradation. Catalyzes the phosphorolysis of single-stranded polyribonucleotides processively in the 3'- to 5'-direction. This chain is Polyribonucleotide nucleotidyltransferase, found in Renibacterium salmoninarum (strain ATCC 33209 / DSM 20767 / JCM 11484 / NBRC 15589 / NCIMB 2235).